Here is a 488-residue protein sequence, read N- to C-terminus: Photosystem II CP43 reaction center protein (488 aa).

Positions 1–29 (MTKVFALGWLLKINLMKTLYSLRRFYHVE) are excised as a propeptide. 5 helical membrane passes run 84 to 108 (LFEV…PHLA), 149 to 170 (LIGP…RDKN), 193 to 215 (KALF…RFVS), 270 to 290 (KPFA…LSYS), and 306 to 327 (WYNN…ASQA). Glu382 contacts [CaMn4O5] cluster. Residues 462-486 (RARAAAAGFEKGINRENEPVLSMRP) form a helical membrane-spanning segment.

This sequence belongs to the PsbB/PsbC family. PsbC subfamily. As to quaternary structure, PSII is composed of 1 copy each of membrane proteins PsbA, PsbB, PsbC, PsbD, PsbE, PsbF, PsbH, PsbI, PsbJ, PsbK, PsbL, PsbM, PsbT, PsbX, PsbY, PsbZ, Psb30/Ycf12, at least 3 peripheral proteins of the oxygen-evolving complex and a large number of cofactors. It forms dimeric complexes. Binds multiple chlorophylls and provides some of the ligands for the Ca-4Mn-5O cluster of the oxygen-evolving complex. It may also provide a ligand for a Cl- that is required for oxygen evolution. PSII binds additional chlorophylls, carotenoids and specific lipids. serves as cofactor.

It is found in the plastid. It localises to the chloroplast thylakoid membrane. Functionally, one of the components of the core complex of photosystem II (PSII). It binds chlorophyll and helps catalyze the primary light-induced photochemical processes of PSII. PSII is a light-driven water:plastoquinone oxidoreductase, using light energy to abstract electrons from H(2)O, generating O(2) and a proton gradient subsequently used for ATP formation. The protein is Photosystem II CP43 reaction center protein of Pyropia yezoensis (Susabi-nori).